A 61-amino-acid chain; its full sequence is Phosphoenolpyruvate synthase (61 aa).

This sequence belongs to the PEP-utilizing enzyme family. Mg(2+) is required as a cofactor.

The enzyme catalyses pyruvate + ATP + H2O = phosphoenolpyruvate + AMP + phosphate + 2 H(+). It participates in carbohydrate biosynthesis; gluconeogenesis. Catalyzes the phosphorylation of pyruvate to phosphoenolpyruvate. The sequence is that of Phosphoenolpyruvate synthase (ppsA) from Enterobacter agglomerans (Erwinia herbicola).